We begin with the raw amino-acid sequence, 517 residues long: Glucose-6-phosphate isomerase (517 aa).

Residue Glu345 is the Proton donor of the active site. Catalysis depends on residues His376 and Lys490.

The protein belongs to the GPI family.

It localises to the cytoplasm. The catalysed reaction is alpha-D-glucose 6-phosphate = beta-D-fructose 6-phosphate. Its pathway is carbohydrate biosynthesis; gluconeogenesis. It functions in the pathway carbohydrate degradation; glycolysis; D-glyceraldehyde 3-phosphate and glycerone phosphate from D-glucose: step 2/4. Its function is as follows. Catalyzes the reversible isomerization of glucose-6-phosphate to fructose-6-phosphate. The polypeptide is Glucose-6-phosphate isomerase (Erythrobacter litoralis (strain HTCC2594)).